The primary structure comprises 402 residues: Glutamyl-tRNA reductase (402 aa).

Substrate-binding positions include 48–51 (TCNR), Ser91, 96–98 (EDQ), and Gln102. Cys49 (nucleophile) is an active-site residue. 171–176 (GAGKMG) contacts NADP(+).

The protein belongs to the glutamyl-tRNA reductase family. In terms of assembly, homodimer.

The enzyme catalyses (S)-4-amino-5-oxopentanoate + tRNA(Glu) + NADP(+) = L-glutamyl-tRNA(Glu) + NADPH + H(+). Its pathway is porphyrin-containing compound metabolism; protoporphyrin-IX biosynthesis; 5-aminolevulinate from L-glutamyl-tRNA(Glu): step 1/2. In terms of biological role, catalyzes the NADPH-dependent reduction of glutamyl-tRNA(Glu) to glutamate 1-semialdehyde (GSA). This chain is Glutamyl-tRNA reductase, found in Methanothermobacter thermautotrophicus (strain ATCC 29096 / DSM 1053 / JCM 10044 / NBRC 100330 / Delta H) (Methanobacterium thermoautotrophicum).